The chain runs to 91 residues: Small ribosomal subunit protein uS19 (91 aa).

Belongs to the universal ribosomal protein uS19 family.

In terms of biological role, protein S19 forms a complex with S13 that binds strongly to the 16S ribosomal RNA. The protein is Small ribosomal subunit protein uS19 of Prochlorococcus marinus (strain NATL1A).